A 1360-amino-acid polypeptide reads, in one-letter code: Lysine-specific demethylase REF6 (1360 aa).

Alanine 2 carries the post-translational modification N-acetylalanine. A JmjN domain is found at alanine 20–lysine 61. One can recognise a JmjC domain in the interval glutamate 203–alanine 369. Residues histidine 246, glutamate 248, and histidine 337 each contribute to the Fe cation site. The disordered stretch occupies residues tyrosine 652 to asparagine 698. A compositionally biased stretch (basic and acidic residues) spans glycine 673 to threonine 694. The Nuclear localization signal motif lies at cysteine 944 to alanine 951. 4 disordered regions span residues proline 955–lysine 1012, alanine 1044–threonine 1081, threonine 1133–arginine 1155, and glutamate 1172–glutamate 1238. Composition is skewed to polar residues over residues glutamate 994–serine 1008 and serine 1046–serine 1057. Residues arginine 1136–lysine 1147 show a composition bias toward basic residues. The span at glutamate 1225–glutamate 1238 shows a compositional bias: acidic residues. A C2H2-type 1; degenerate zinc finger spans residues tyrosine 1243–asparagine 1266. The Zn(2+) site is built by cysteine 1245, cysteine 1250, histidine 1263, cysteine 1268, cysteine 1273, histidine 1280, histidine 1286, histidine 1290, cysteine 1298, cysteine 1303, histidine 1316, histidine 1320, cysteine 1328, cysteine 1333, histidine 1346, and histidine 1352. 3 C2H2-type zinc fingers span residues asparagine 1266–histidine 1290, leucine 1296–histidine 1320, and tyrosine 1326–histidine 1352. The tract at residues lysine 1275–arginine 1348 is DNA-binding.

This sequence belongs to the JHDM3 histone demethylase family. As to quaternary structure, forms homooligomers. Interacts with BZR2 (via N-terminus). Interacts with BRM in the SWI/SNF complex. Interacts (via N-terminus) with NFYC9. Associates with INO80. As to expression, highly expressed in the shoot apical meristem and primary and secondary root tips, and lower expression in cotyledons, leaves and root axis along vascular tissues. Detected in inflorescences, stems and siliques. Present in seeds.

The protein localises to the nucleus. The catalysed reaction is N(6),N(6),N(6)-trimethyl-L-lysyl(27)-[histone H3] + 2-oxoglutarate + O2 = N(6),N(6)-dimethyl-L-lysyl(27)-[histone H3] + formaldehyde + succinate + CO2. The enzyme catalyses N(6),N(6)-dimethyl-L-lysyl(27)-[histone H3] + 2-oxoglutarate + O2 = N(6)-methyl-L-lysyl(27)-[histone H3] + formaldehyde + succinate + CO2. In terms of biological role, histone demethylase that demethylates 'Lys-27' (H3K27me) of histone H3, thus acting as a positive regulator of gene expression. Demethylates both tri- (H3K27me3) and di-methylated (H3K27me2) H3K27me. Also demethylates H3K4me3/2 and H3K36me3/2 in an in vitro assay. Involved in the transcriptional regulation of hundreds of genes regulating developmental patterning and responses to various stimuli. Binds DNA via its four zinc fingers in a sequence-specific manner, 5'-CTCTG(C/T)T(C/T)-3' (5'-CTCTGYTY-3'), with a preference for hypo-methylated status (e.g. cytosine methylation), to promote the demethylation of H3K27me3 and recruit the chromatin remodeler BRM in order to activate gene expression. Participates in the regulation of organ boundary formation. Bind mostly motifs located in active chromatin states which are depleted for heterochromatic modifications. Involved in the regulation of flowering time by repressing FLOWERING LOCUS C (FLC) expression. Stimulates lateral roots formation (e.g. primordium initiation and emergence) via the epigenetic de-repression of PIN genes such as PIN1, PIN3 and PIN7 directly by modulating the methylation status of their loci. Interacts with the NF-Y complex to regulate SOC1. Mediates the recruitment of BRM to its target loci. Together with EEN, involved in the epigenetic chromatin-dependent regulatory mechanism that monitors the expression of the essential multifunctional plant stress regulator EIN2 via H3K27me3 repressive histone demethylation and histone variant H2A.Z eviction, thus modulating responses to ethylene (ET), especially during embryogenesis. Eluviates seed dormancy by triggering abscisic acid (ABA) catabolism in seeds via the induction of CYP707A1 and CYP707A3 expression, genes involved in ABA degradation; binds directly to CYP707A1 and CYP707A3 loci to reduce their H3K27me3 levels in developing siliques. Required for systemic acquired resistance (SAR) toward pathogenic bacteria (e.g. Pseudomonas syringae pv tomato DC3000 (avrPto)). Together with FLD and MSI4/FVE, contributes to dehydroabietinal-dependent (DA, a diterpenoid tricyclic diterpene) activation of flowering ans SAR. Binds to the HSFA2 chromatin region to alleviate H3K27me3 repressive marks and trigger its expression in response to heat in a BRM-dependent manner. Involved in the mechanisms necessary for quick response to heat and subsequent heritable transgenerational memory of heat acclimation (global warming) such as early flowering and attenuated immunity; this process includes epigenetic regulation as well as post-transcriptional gene silencing (PTGS). In response to heat, HSFA2 is activated and promotes the expression of REF6 which in turn derepresses HSFA2, thus establishing a heritable feedback loop able to trigger SGIP1 and subsequent SGIP1-mediated SGS3 degradation; this prevents the biosynthesis of trans-acting siRNA (tasiRNA) and leads to the release of HTT5, which drives early flowering but attenuates immunity. Involved in the maintenance of H3K27me1 histone marks on euchromatin in a PRC2-dependent manner, to maintain low-level basal expression of corresponding genes. Together with ELF6, required for H3K27me3 resetting (especially in constitutive heterochromatin within the pericentromeric regions) and transgenerational inheritance of histone marks, thus acting in safeguarding genome and epigenome integrity during sexual reproduction. The chain is Lysine-specific demethylase REF6 from Arabidopsis thaliana (Mouse-ear cress).